A 473-amino-acid polypeptide reads, in one-letter code: MTVSYTLKVAEARFGGFSGLLLRWRGSIYKLLYKEFLLFGALYAVLSITYRLLLTQEQRYVYAQVARYCNRSADLIPLSFVLGFYVTLVVNRWWSQYTSIPLPDQLMCVISASVHGVDQRGRLLRRTLIRYANLASVLVLRSVSTRVLKRFPTMEHVVDAGFMSQEERKKFESLKSDFNKYWVPCVWFTNLAAQARRDGRIRDDIALCLLLEELNKYRAKCSMLFHYDWISIPLVYTQVVTIAVYSFFALSLVGRQFVEPEAGAAKPQKLLKPGQEPAPALGDPDMYVPLTTLLQFFFYAGWLKVAEQIINPFGEDDDDFETNQLIDRNLQVSLLSVDEMYQNLPPAEKDQYWDEDQPQPPYTVATAAESLRPSFLGSTFNLRMSDDPEQSLQVEASPGSGRPAPAAQTPLLGRFLGVGAPSPAISLRNFGRVRGTPRPPHLLRFRAEEGGDPEAAARIEEESAESGDEALEP.

Topologically, residues 1-31 (MTVSYTLKVAEARFGGFSGLLLRWRGSIYKL) are cytoplasmic. A10 is a Ca(2+) binding site. The chain crosses the membrane as a helical span at residues 32 to 51 (LYKEFLLFGALYAVLSITYR). The Extracellular portion of the chain corresponds to 52–60 (LLLTQEQRY). The chain crosses the membrane as a helical span at residues 61-82 (VYAQVARYCNRSADLIPLSFVL). The Cytoplasmic portion of the chain corresponds to 83-237 (GFYVTLVVNR…DWISIPLVYT (155 aa)). A helical transmembrane segment spans residues 238-255 (QVVTIAVYSFFALSLVGR). At 256-289 (QFVEPEAGAAKPQKLLKPGQEPAPALGDPDMYVP) the chain is on the extracellular side. A helical membrane pass occupies residues 290 to 303 (LTTLLQFFFYAGWL). Over 304 to 473 (KVAEQIINPF…AESGDEALEP (170 aa)) the chain is Cytoplasmic. The Ca(2+) site is built by Q308, N311, D316, and D319. Disordered stretches follow at residues 379–408 (TFNL…PAAQ) and 428–473 (RNFG…ALEP). A compositionally biased stretch (low complexity) spans 396–407 (ASPGSGRPAPAA). The span at 445–461 (FRAEEGGDPEAAARIEE) shows a compositional bias: basic and acidic residues. The segment covering 462 to 473 (ESAESGDEALEP) has biased composition (acidic residues).

The protein belongs to the anion channel-forming bestrophin (TC 1.A.46) family. Calcium-sensitive chloride channel subfamily. As to expression, predominantly found in colon and the weakly in fetal brain, spinal cord, retina, lung, trachea, testis and placenta.

The protein localises to the cell membrane. The enzyme catalyses chloride(in) = chloride(out). The catalysed reaction is hydrogencarbonate(in) = hydrogencarbonate(out). In terms of biological role, ligand-gated anion channel that allows the movement of anions across cell membranes when activated by Calcium (Ca2+). Mediates the movement of hydrogencarbonate and chloride. The polypeptide is Bestrophin-4 (Homo sapiens (Human)).